A 351-amino-acid chain; its full sequence is Phosphoribosylformylglycinamidine cyclo-ligase (351 aa).

Belongs to the AIR synthase family.

Its subcellular location is the cytoplasm. The catalysed reaction is 2-formamido-N(1)-(5-O-phospho-beta-D-ribosyl)acetamidine + ATP = 5-amino-1-(5-phospho-beta-D-ribosyl)imidazole + ADP + phosphate + H(+). The protein operates within purine metabolism; IMP biosynthesis via de novo pathway; 5-amino-1-(5-phospho-D-ribosyl)imidazole from N(2)-formyl-N(1)-(5-phospho-D-ribosyl)glycinamide: step 2/2. In Burkholderia cenocepacia (strain ATCC BAA-245 / DSM 16553 / LMG 16656 / NCTC 13227 / J2315 / CF5610) (Burkholderia cepacia (strain J2315)), this protein is Phosphoribosylformylglycinamidine cyclo-ligase.